A 553-amino-acid chain; its full sequence is Muellerian-inhibiting factor (553 aa).

A signal peptide spans 1–22 (MQGPHLSLLLLLLATMGAVLQA). The propeptide occupies 23–445 (DTVEELTNTR…GREGRGRAGR (423 aa)). N-linked (GlcNAc...) asparagine glycans are attached at residues N325 and N409. Cystine bridges form between C455-C519, C481-C550, and C485-C552.

Belongs to the TGF-beta family. As to quaternary structure, homodimer; disulfide-linked. In terms of processing, preproprotein is proteolytically processed to generate N- and C-terminal cleavage products that homodimerize and associate to form a biologically active non-covalent complex. Binding of the non-covalent complex to AMHR2 induces dissociation of the pro-region from the mature C-terminal dimer. The N-terminal portion of the protein, despite having no intrinsic activity, has the role of amplifying the activity of the C-terminus. Mainly expressed in granulosa cells from preantral and small antral follicles.

It localises to the secreted. Plays an important role in several reproductive functions. Induces Muellerian duct regression during male fetal sexual differentiation and plays a role in Leydig cell differentiation and function. In female acts as a negative regulator of the primordial to primary follicle transition and decreases FSH sensitivity of growing follicles. AMH signals by binding to a specific type-II receptor, AMHR2, that heterodimerizes with type-I receptors (ACVR1 and BMPR1A), and recruiting SMAD proteins that are translocated to the nucleus to regulate target gene expression. This Rattus norvegicus (Rat) protein is Muellerian-inhibiting factor (Amh).